The sequence spans 333 residues: Electron transfer flavoprotein subunit alpha, mitochondrial (333 aa).

A mitochondrion-targeting transit peptide spans 1 to 19; that stretch reads MFRAAAPGQLRRAASSLRF. Residues 20-204 are domain I; that stretch reads QSTLVIAEHA…EISEWLDQKL (185 aa). N6-acetyllysine; alternate is present on K59. K59 carries the post-translational modification N6-succinyllysine; alternate. K62 carries the N6-acetyllysine modification. K69 carries the N6-acetyllysine; alternate modification. An N6-succinyllysine; alternate modification is found at K69. K75 carries the N6-acetyllysine modification. Position 93 is a phosphothreonine (T93). K101 and K139 each carry N6-acetyllysine. At S140 the chain carries Phosphoserine. K158 carries the N6-acetyllysine; alternate modification. Position 158 is an N6-succinyllysine; alternate (K158). Position 164 is an N6-acetyllysine (K164). Position 187 is an N6-succinyllysine (K187). At K203 the chain carries N6-acetyllysine; alternate. Position 203 is an N6-succinyllysine; alternate (K203). The interval 205–333 is domain II; it reads TKSDRPELTG…PEMTEILKKK (129 aa). K216 carries the N6-succinyllysine modification. Position 223 (R223) interacts with FAD. N6-acetyllysine; alternate occurs at positions 226 and 232. 2 positions are modified to N6-succinyllysine; alternate: K226 and K232. FAD contacts are provided by residues S248, 263 to 266, 281 to 286, and N300; these read VGQT and SGAIQH. K301 carries the N6-succinyllysine modification. 318-319 is a binding site for FAD; it reads DL.

The protein belongs to the ETF alpha-subunit/FixB family. As to quaternary structure, heterodimer composed of ETFA and ETFB. Identified in a complex that contains ETFA, ETFB and ETFRF1. Interaction with ETFRF1 promotes dissociation of the bound FAD and loss of electron transfer activity. Interacts with TASOR. FAD serves as cofactor.

The protein localises to the mitochondrion matrix. Heterodimeric electron transfer flavoprotein that accepts electrons from several mitochondrial dehydrogenases, including acyl-CoA dehydrogenases, glutaryl-CoA and sarcosine dehydrogenase. It transfers the electrons to the main mitochondrial respiratory chain via ETF-ubiquinone oxidoreductase (ETF dehydrogenase). Required for normal mitochondrial fatty acid oxidation and normal amino acid metabolism. The chain is Electron transfer flavoprotein subunit alpha, mitochondrial (ETFA) from Macaca fascicularis (Crab-eating macaque).